The chain runs to 983 residues: Polyhomeotic-like protein 3 (983 aa).

7 disordered regions span residues 1–34 (MDTE…MQQP), 103–149 (LSSG…SSTS), 225–283 (VLSS…TAVT), 313–332 (LHSP…QQQQ), 339–410 (LQNS…SQSP), 477–509 (PGQQ…STSP), and 601–620 (DECV…PAAI). Low complexity-rich tracts occupy residues 9 to 29 (TSSV…TSSS) and 103 to 126 (LSSG…SQTS). Over residues 127 to 139 (INLSTSPTPAQLI) the composition is skewed to polar residues. Positions 140-149 (SRSQASSSTS) are enriched in low complexity. A compositionally biased stretch (polar residues) spans 225–257 (VLSSSQNGPPKSTSQTQSLTICHNKTTVTSSKI). A compositionally biased stretch (basic and acidic residues) spans 258 to 271 (SQRDPSPESNKKGE). 2 positions are modified to phosphoserine: serine 263 and serine 272. Residues 274–283 (SLESRSTAVT) show a composition bias toward polar residues. Serine 315 is subject to Phosphoserine. Over residues 365-383 (SNAQSQHCSPIQSHPSPLT) the composition is skewed to polar residues. Low complexity predominate over residues 384–398 (VSPNQSQSAQQSVVV). Positions 477–489 (PGQQIVSPSHQQY) are enriched in polar residues. A compositionally biased stretch (low complexity) spans 490–506 (SSLQSSPIPIASPPQMS). Threonine 609 and threonine 614 each carry phosphothreonine. A Phosphoserine modification is found at serine 616. Residues lysine 691 and lysine 732 each participate in a glycyl lysine isopeptide (Lys-Gly) (interchain with G-Cter in SUMO2) cross-link. The HD1 motif lies at 691-720 (KPPQAIVKPQILTHVIEGFVIQEGLEPFPV). Serine 761 and serine 762 each carry phosphoserine. An FCS-type zinc finger spans residues 776–810 (EEMDSELLKCEFCGKMGYANEFLRSKRFCTMSCAK). Zn(2+)-binding residues include cysteine 785, cysteine 788, cysteine 804, and cysteine 808. A Glycyl lysine isopeptide (Lys-Gly) (interchain with G-Cter in SUMO2) cross-link involves residue lysine 810. 2 disordered regions span residues 827–847 (RKPD…PDGA) and 864–889 (EEDL…SERE). The 65-residue stretch at 919 to 983 (WTVDDVWAFI…CARINSLKES (65 aa)) folds into the SAM domain.

As to quaternary structure, component of a PRC1-like complex.

Its subcellular location is the nucleus. Its function is as follows. Component of a Polycomb group (PcG) multiprotein PRC1-like complex, a complex class required to maintain the transcriptionally repressive state of many genes, including Hox genes, throughout development. PcG PRC1 complex acts via chromatin remodeling and modification of histones; it mediates monoubiquitination of histone H2A 'Lys-119', rendering chromatin heritably changed in its expressibility. This chain is Polyhomeotic-like protein 3 (PHC3), found in Homo sapiens (Human).